A 351-amino-acid chain; its full sequence is UDP-3-O-acylglucosamine N-acyltransferase (351 aa).

Catalysis depends on His257, which acts as the Proton acceptor.

This sequence belongs to the transferase hexapeptide repeat family. LpxD subfamily. In terms of assembly, homotrimer.

The enzyme catalyses a UDP-3-O-[(3R)-3-hydroxyacyl]-alpha-D-glucosamine + a (3R)-hydroxyacyl-[ACP] = a UDP-2-N,3-O-bis[(3R)-3-hydroxyacyl]-alpha-D-glucosamine + holo-[ACP] + H(+). It participates in bacterial outer membrane biogenesis; LPS lipid A biosynthesis. Catalyzes the N-acylation of UDP-3-O-acylglucosamine using 3-hydroxyacyl-ACP as the acyl donor. Is involved in the biosynthesis of lipid A, a phosphorylated glycolipid that anchors the lipopolysaccharide to the outer membrane of the cell. This Methylorubrum extorquens (strain PA1) (Methylobacterium extorquens) protein is UDP-3-O-acylglucosamine N-acyltransferase.